The sequence spans 280 residues: Octanoyltransferase LIP2p2, chloroplastic (280 aa).

The transit peptide at 1-34 (MVFSVATSSVTNPKLHHHHHLSDFNRNRVSTSLK) directs the protein to the chloroplast. The region spanning 81-270 (QECSDSLIIL…EFSEVFQLQM (190 aa)) is the BPL/LPL catalytic domain. Substrate-binding positions include 123–130 (RGGEVTYH), 191–193 (AIG), and 204–206 (GLA). Cys222 functions as the Acyl-thioester intermediate in the catalytic mechanism.

Belongs to the LipB family. As to expression, expressed in roots, leaves, cauline leaves, stems, siliques and flowers.

Its subcellular location is the plastid. It localises to the chloroplast. It carries out the reaction octanoyl-[ACP] + L-lysyl-[protein] = N(6)-octanoyl-L-lysyl-[protein] + holo-[ACP] + H(+). The protein operates within protein modification; protein lipoylation via endogenous pathway; protein N(6)-(lipoyl)lysine from octanoyl-[acyl-carrier-protein]: step 1/2. Its function is as follows. Catalyzes the transfer of endogenously produced octanoic acid from octanoyl-acyl-carrier-protein onto the lipoyl domains of lipoate-dependent enzymes. Lipoyl-ACP can also act as a substrate although octanoyl-ACP is likely to be the physiological substrate. Together with LIP1P is essential for de novo plastidial protein lipoylation during seed development. Acts redundantly with LIP2P. The sequence is that of Octanoyltransferase LIP2p2, chloroplastic from Arabidopsis thaliana (Mouse-ear cress).